The following is a 608-amino-acid chain: Dihydroxy-acid dehydratase, chloroplastic (608 aa).

A chloroplast-targeting transit peptide spans 1 to 34 (MQATIFSPRATLFPCKPLLPSHNVNSRRPSIISC). The residue at position 35 (Ser35) is an N-acetylserine. [2Fe-2S] cluster is bound at residue Cys100. A Mg(2+)-binding site is contributed by Asp132. [2Fe-2S] cluster is bound at residue Cys173. Position 174 (Asp174) interacts with Mg(2+). Cys245 lines the [2Fe-2S] cluster pocket. Glu497 contributes to the Mg(2+) binding site. Ser523 functions as the Proton acceptor in the catalytic mechanism.

It belongs to the IlvD/Edd family. [2Fe-2S] cluster serves as cofactor. It depends on Mg(2+) as a cofactor.

It is found in the plastid. It localises to the chloroplast. The enzyme catalyses (2R)-2,3-dihydroxy-3-methylbutanoate = 3-methyl-2-oxobutanoate + H2O. The catalysed reaction is (2R,3R)-2,3-dihydroxy-3-methylpentanoate = (S)-3-methyl-2-oxopentanoate + H2O. It participates in amino-acid biosynthesis; L-isoleucine biosynthesis; L-isoleucine from 2-oxobutanoate: step 3/4. It functions in the pathway amino-acid biosynthesis; L-valine biosynthesis; L-valine from pyruvate: step 3/4. Its activity is regulated as follows. Is highly competitively inhibited by the fungal sesquiterpenoid aspterric acid, which is effective as a herbicide in spray applications. Functions in the biosynthesis of branched-chain amino acids. Catalyzes the dehydration of (2R,3R)-2,3-dihydroxy-3-methylpentanoate (2,3-dihydroxy-3-methylvalerate) into 2-oxo-3-methylpentanoate (2-oxo-3-methylvalerate) and of (2R)-2,3-dihydroxy-3-methylbutanoate (2,3-dihydroxyisovalerate) into 2-oxo-3-methylbutanoate (2-oxoisovalerate), the penultimate precursor to L-isoleucine and L-valine, respectively. The sequence is that of Dihydroxy-acid dehydratase, chloroplastic from Arabidopsis thaliana (Mouse-ear cress).